A 180-amino-acid polypeptide reads, in one-letter code: uncharacterized protein (180 aa).

The N-terminal stretch at 1–22 (MKLRFISSALAAALFAATGSYA) is a signal peptide. Residues Cys-41 and Cys-81 are joined by a disulfide bond.

It belongs to the fimbrial protein family.

The protein localises to the fimbrium. This is an uncharacterized protein from Escherichia coli O157:H7.